The following is a 277-amino-acid chain: MELIEKHASFGGWQNVYRHYSASLKCEMNVGVYLPPKAAGEKLPVLYWLSGLTCNEQNFITKSGVQRYAAEHNIIVVAPDTSPRGSHVADADRYDLGQGAGFYLNATQAPWNEHYKMYDYIRNELPDLVMNHFPATAKKSISGHSMGGLGALVLALRNPDEYVSVSAFSPIVSPSQVPWGQQAFAAYLGENKEAWLDYHPVSLISQGQRVAEIMVDQGLSDDFYAEQLRTQNLEKICQEMNIKTLIRYHEGYDHSYYFVSSFIGEHIAYHANKLNMR.

Catalysis depends on charge relay system residues serine 145, aspartate 221, and histidine 254.

Belongs to the esterase D family.

The catalysed reaction is S-formylglutathione + H2O = formate + glutathione + H(+). Serine hydrolase involved in the detoxification of formaldehyde. Hydrolyzes S-formylglutathione to glutathione and formate. This Escherichia coli O157:H7 protein is S-formylglutathione hydrolase FrmB (frmB).